The primary structure comprises 605 residues: MITKESIENLSQRLNIVDIIENYIEVKKQGSSFVCICPFHADKNPSMHINPIKGFYHCFACKAGGDAFKFVMDYEKLSFADAVEKVASLSNFTLSYTKEKQENKKELKSILPSLNAYFKDNLKHHKEVLTYLYQRALNDKDIAKFELGFAGASEDSIRLLQNQKIPLEDAMSVGALKKDENNEFYASFIWRITFPIYDHKDLLVGFGGRTLNPNVPAKYVNSPQNILFDKSRIFYAFNIAKENIAKKKEIIVCEGYMDAIAFHKAGFNNAVAVLGTALTEHHLPLIRRYDAKVILCFDNDEAGLKAATRSAFLLSTNKIDGKVAILQGGKDPAELVAKNESTKLHNILDEGIELGEFYIRRLISTHSIISALDKQKALETIQKFTFNLEPLVANSYTSLVSNLLKVDEKFIVLSQNSKKTIQTPLISQNKYNFPKEKIHIAELELIAFLKQHPDICNDFKQISDSVCFKHKILLDKILEKKGYEDSDIREFESKNIRKNLNYSEFLLGICKVNLAFLNNVKIKNSTLALKKQLFTLIDKNLNLLIKNLNTAELNNFLKEYLSFLKYEKNEEILQQSFRNLNGIFGNKNFTAYDLGFSIQNNDEPF.

A CHC2-type zinc finger spans residues 37 to 61 (CPFHADKNPSMHINPIKGFYHCFAC). The Toprim domain occupies 248-329 (KEIIVCEGYM…DGKVAILQGG (82 aa)). Positions 254, 298, and 300 each coordinate Mg(2+).

Belongs to the DnaG primase family. In terms of assembly, monomer. Interacts with DnaB. The cofactor is Zn(2+). Requires Mg(2+) as cofactor.

The catalysed reaction is ssDNA + n NTP = ssDNA/pppN(pN)n-1 hybrid + (n-1) diphosphate.. RNA polymerase that catalyzes the synthesis of short RNA molecules used as primers for DNA polymerase during DNA replication. This is DNA primase from Campylobacter jejuni subsp. jejuni serotype O:2 (strain ATCC 700819 / NCTC 11168).